A 729-amino-acid chain; its full sequence is DNA topoisomerase 3 (729 aa).

A Toprim domain is found at 3-136 (KSVVIAEKPS…IKRLWISSVT (134 aa)). Mg(2+)-binding residues include glutamate 9 and aspartate 105. In terms of domain architecture, Topo IA-type catalytic spans 153-594 (YDNLYASAVA…EMKNYTKEIV (442 aa)). The segment at 187–192 (NCGRVQ) is interaction with DNA. Catalysis depends on tyrosine 310, which acts as the O-(5'-phospho-DNA)-tyrosine intermediate. Residues 686–713 (ERRKKESGNKADKRDVQKYMKQQNKEEE) show a composition bias toward basic and acidic residues. Residues 686–719 (ERRKKESGNKADKRDVQKYMKQQNKEEEPLNNPF) form a disordered region.

It belongs to the type IA topoisomerase family. Requires Mg(2+) as cofactor.

It catalyses the reaction ATP-independent breakage of single-stranded DNA, followed by passage and rejoining.. In terms of biological role, releases the supercoiling and torsional tension of DNA, which is introduced during the DNA replication and transcription, by transiently cleaving and rejoining one strand of the DNA duplex. Introduces a single-strand break via transesterification at a target site in duplex DNA. The scissile phosphodiester is attacked by the catalytic tyrosine of the enzyme, resulting in the formation of a DNA-(5'-phosphotyrosyl)-enzyme intermediate and the expulsion of a 3'-OH DNA strand. The free DNA strand then undergoes passage around the unbroken strand, thus removing DNA supercoils. Finally, in the religation step, the DNA 3'-OH attacks the covalent intermediate to expel the active-site tyrosine and restore the DNA phosphodiester backbone. The protein is DNA topoisomerase 3 of Bacillus cereus (strain ATCC 14579 / DSM 31 / CCUG 7414 / JCM 2152 / NBRC 15305 / NCIMB 9373 / NCTC 2599 / NRRL B-3711).